The sequence spans 108 residues: MKALCLLLLPVLGLLVSSKTLCSMEEAINERIQEVAGSLIFRAISSIGLECQSVTSRGDLATCPRGFAVTGCTCGSACGSWDVRAETTCHCQCAGMDWTGARCCRVQP.

The signal sequence occupies residues 1–18 (MKALCLLLLPVLGLLVSS). 5 disulfides stabilise this stretch: Cys51-Cys104, Cys63-Cys103, Cys72-Cys89, Cys74-Cys91, and Cys78-Cys93.

It belongs to the resistin/FIZZ family. Homodimer; disulfide-linked. Interacts with DEFA1. As to expression, expressed in white adipose tissue (at protein level). Widely expressed, with particularly strong expression in lung, bone marrow, breast and peripheral blood. Expressed strongly in bone marrow and at lower levels in lung, but not detected in other tissues. Isoform 2 is detected in adipose tissue, bone marrow, brain, lung, peripheral blood, placenta and thymus.

It localises to the secreted. Functionally, hormone that seems to suppress insulin ability to stimulate glucose uptake into adipose cells. Potentially links obesity to diabetes. Promotes chemotaxis in myeloid cells. The chain is Resistin (RETN) from Homo sapiens (Human).